Consider the following 360-residue polypeptide: ACT1-like protein (360 aa).

Positions 339–360 (KKQSHNNANDHHEDSMNYSITQ) are disordered.

Interacts with the receptor complex composed of ilcr-1 and ilcr-2. Also interacts with pik-1. Expressed in neurons.

Its function is as follows. May act as an adapter to facilitate downstream signaling for the receptor complex composed of ilcr-1 and ilcr-2, which is a signaling complex that modulates neuronal activity and animal behavior in response to sensory neuron input. The protein is ACT1-like protein of Caenorhabditis elegans.